The primary structure comprises 238 residues: End-binding protein 1 (238 aa).

In terms of domain architecture, Calponin-homology (CH) spans 15–117 (FVGRVSLLKW…FFQWFKWFFD (103 aa)). Residues 101–238 (KYMDNFEFFQ…EDILYAEYHQ (138 aa)) are interaction with aurora kinase. Positions 124 to 165 (KSGATESGSANAVTKTSKPGNRSGSTAASMQNPKASSTSGPS) are enriched in polar residues. Residues 124 to 169 (KSGATESGSANAVTKTSKPGNRSGSTAASMQNPKASSTSGPSIDSK) form a disordered region. A Phosphoserine modification is found at serine 148. The EB1 C-terminal domain occupies 156–238 (PKASSTSGPS…EDILYAEYHQ (83 aa)).

It belongs to the MAPRE family. Homodimer; disulfide-linked and via interaction of the C-terminal EB1-specific domains. Interacts with BOP1 (via C-terminal WD repeats). Interacts with giardin subunit gamma, neurogenic locus notch homolog protein, GL50803_8358 and GL50803_11327. Interacts (via C-terminal residues 101-238) with aurora kinase. Interacts with tubulin gamma chain. Post-translationally, phosphorylated in vitro by aurora kinase. Phosphorylation is important for cell division.

It localises to the nucleus membrane. Its subcellular location is the cytoplasm. The protein localises to the cytoskeleton. The protein resides in the spindle. It is found in the nucleus envelope. It localises to the flagellum axoneme. Its subcellular location is the cell projection. The protein localises to the cilium. The protein resides in the flagellum. In terms of biological role, involved in cell division. Involved in mitosis. Regulates dynamics of microtubules (MTs) during mitosis. Required for cytokinesis. Binds polymerized MTs in vitro. Is able to rescue a mitotic division defect, the proper positioning of the nucleus, of the S.cerevisiae BIM1 knockout mutant in a complementation assay. May play a role in spindle positioning and MT distribution. May be involved in MT nucleation for the formation of median bodies and in the biogenesis of flagella. Based on its localization to both the flagellar exit point and the distal flagellar tips, it may mediate the transition from anterograde to retrograde intraflagellar transport (IFT). In Giardia intestinalis (strain ATCC 50803 / WB clone C6) (Giardia lamblia), this protein is End-binding protein 1.